Reading from the N-terminus, the 201-residue chain is FMN-dependent NADH:quinone oxidoreductase (201 aa).

Residues Ser10, 16–18, 96–99, and 140–143 contribute to the FMN site; these read SQS, MYNF, and SRGG.

It belongs to the azoreductase type 1 family. In terms of assembly, homodimer. Requires FMN as cofactor.

The catalysed reaction is 2 a quinone + NADH + H(+) = 2 a 1,4-benzosemiquinone + NAD(+). The enzyme catalyses N,N-dimethyl-1,4-phenylenediamine + anthranilate + 2 NAD(+) = 2-(4-dimethylaminophenyl)diazenylbenzoate + 2 NADH + 2 H(+). Functionally, quinone reductase that provides resistance to thiol-specific stress caused by electrophilic quinones. Also exhibits azoreductase activity. Catalyzes the reductive cleavage of the azo bond in aromatic azo compounds to the corresponding amines. This is FMN-dependent NADH:quinone oxidoreductase from Cronobacter sakazakii (strain ATCC BAA-894) (Enterobacter sakazakii).